The sequence spans 63 residues: Overexpressed in colon carcinoma 1 protein homolog (63 aa).

The span at 1-10 (MGCGNSTATS) shows a compositional bias: polar residues. Residues 1–37 (MGCGNSTATSAAAGRGKPGAVKDATEDSITEDDKRRN) form a disordered region.

The protein belongs to the OCC1 family.

The protein is Overexpressed in colon carcinoma 1 protein homolog of Rattus norvegicus (Rat).